The primary structure comprises 244 residues: MSATERQLQYLRQLVDGARRIAVLTGAGMSTESGIPDFRSADGLWSRDMSLTDAVSVDYFRRDPAAFWRAFRDIFHIKLVGDYQPNDGHRFLAALEASGKEVTILTQNIDGLHGRAGSRRVLELHGTLLTASCPDCRSPHPLDYVQRHELPACRRCGAALKPDVVLYGEAVPLIDVAFQAALNAELLLVMGSSLEVSPVNLIPVEAARAGIPCALINYTPTRFDALFDLCIQAGIGDTCRQLRA.

A Deacetylase sirtuin-type domain is found at 1-244 (MSATERQLQY…IGDTCRQLRA (244 aa)). NAD(+) is bound by residues Ala-27, Thr-31, Phe-38, Arg-39, Gln-107, Ile-109, Asp-110, and His-125. Nicotinamide is bound at residue Phe-38. Residues Ile-109 and Asp-110 each coordinate nicotinamide. His-125 acts as the Proton acceptor in catalysis. Zn(2+)-binding residues include Cys-133, Cys-136, Cys-153, and Cys-156. Positions 192, 193, 217, and 235 each coordinate NAD(+).

This sequence belongs to the sirtuin family. Class U subfamily. The cofactor is Zn(2+).

The protein resides in the cytoplasm. The enzyme catalyses N(6)-acetyl-L-lysyl-[protein] + NAD(+) + H2O = 2''-O-acetyl-ADP-D-ribose + nicotinamide + L-lysyl-[protein]. In terms of biological role, NAD-dependent protein deacetylase which modulates the activities of several enzymes which are inactive in their acetylated form. The chain is NAD-dependent protein deacetylase from Chromobacterium violaceum (strain ATCC 12472 / DSM 30191 / JCM 1249 / CCUG 213 / NBRC 12614 / NCIMB 9131 / NCTC 9757 / MK).